We begin with the raw amino-acid sequence, 515 residues long: MVKLSAEDLNDYLNPGVACVKPVKVQKKQDNQQNIKVNGESYYEVTKDTGEVEELGIASISLNDCLACSGCITSAESVLINLQSYHEVLKFVNAKEADDFFILQMSPQARASLAAYYNLSVQEVQLWIQSVFTNELKFNVVVDTGFSREISLRQAAIEFCQSWVAANAAKTVYNSKSGEVAPKPLPVLSSSCPGWICYVEKTHSSLIPHISTVRSPQQVAGRLLKDWFSYQLGISRKKIWVLSLMPCFDKKLEASRNDFVNEQVRDVDCVITPKELVELLKTKNISPQSMDLDSLSISEQTPCLPSWYEPVQFEQQNGSSSGGYLHYIMTFAAKALFDINDLTNRINVSQKNADMIEYELTSPDTGETLLRMATCYGFRNIQNLVRNVGRKSAPRRGRVLLKRMKNMSTSPSTGTGKQKLDYVEVMACPGGCINGGGQLPPPESSADFSGISREWMRQVEAHYFQPGVRQVDNAAVDAAVEHWLPSYSLQQSILHTKYHAVQNDTENPVALANTW.

Residues Cys-19, Cys-65, Cys-68, Cys-71, Cys-192, Cys-247, Cys-428, and Cys-432 each coordinate [4Fe-4S] cluster.

It belongs to the NARF family.

In terms of biological role, component of the cytosolic Fe/S protein assembly machinery. Required for maturation of extramitochondrial Fe/S proteins. May play a role in the transfer of pre-assembled Fe/S clusters to target apoproteins. In Schizosaccharomyces japonicus (strain yFS275 / FY16936) (Fission yeast), this protein is Cytosolic Fe-S cluster assembly factor NAR1 homolog.